The primary structure comprises 388 residues: UDP-N-acetylglucosamine--N-acetylmuramyl-(pentapeptide) pyrophosphoryl-undecaprenol N-acetylglucosamine transferase (388 aa).

Residues 15 to 17 (TGG), Asn125, Arg168, Ser196, and Gln297 contribute to the UDP-N-acetyl-alpha-D-glucosamine site.

It belongs to the glycosyltransferase 28 family. MurG subfamily.

The protein resides in the cell inner membrane. It carries out the reaction di-trans,octa-cis-undecaprenyl diphospho-N-acetyl-alpha-D-muramoyl-L-alanyl-D-glutamyl-meso-2,6-diaminopimeloyl-D-alanyl-D-alanine + UDP-N-acetyl-alpha-D-glucosamine = di-trans,octa-cis-undecaprenyl diphospho-[N-acetyl-alpha-D-glucosaminyl-(1-&gt;4)]-N-acetyl-alpha-D-muramoyl-L-alanyl-D-glutamyl-meso-2,6-diaminopimeloyl-D-alanyl-D-alanine + UDP + H(+). It functions in the pathway cell wall biogenesis; peptidoglycan biosynthesis. Functionally, cell wall formation. Catalyzes the transfer of a GlcNAc subunit on undecaprenyl-pyrophosphoryl-MurNAc-pentapeptide (lipid intermediate I) to form undecaprenyl-pyrophosphoryl-MurNAc-(pentapeptide)GlcNAc (lipid intermediate II). The chain is UDP-N-acetylglucosamine--N-acetylmuramyl-(pentapeptide) pyrophosphoryl-undecaprenol N-acetylglucosamine transferase from Novosphingobium aromaticivorans (strain ATCC 700278 / DSM 12444 / CCUG 56034 / CIP 105152 / NBRC 16084 / F199).